We begin with the raw amino-acid sequence, 259 residues long: Small ribosomal subunit protein uS7m (259 aa).

A mitochondrion-targeting transit peptide spans 1–39; it reads MLRLIKQPLFRCASSGHLMKESLVFIHQTRTFQVGKFTS. Thr-157 carries the phosphothreonine modification.

The protein belongs to the universal ribosomal protein uS7 family. Component of the mitochondrial small ribosomal subunit (mt-SSU). Mature yeast 74S mitochondrial ribosomes consist of a small (37S) and a large (54S) subunit. The 37S small subunit contains a 15S ribosomal RNA (15S mt-rRNA) and at least 32 different proteins. The 54S large subunit contains a 21S rRNA (21S mt-rRNA) and at least 45 different proteins.

The protein resides in the mitochondrion. Functionally, component of the mitochondrial ribosome (mitoribosome), a dedicated translation machinery responsible for the synthesis of mitochondrial genome-encoded proteins, including at least some of the essential transmembrane subunits of the mitochondrial respiratory chain. The mitoribosomes are attached to the mitochondrial inner membrane and translation products are cotranslationally integrated into the membrane. This chain is Small ribosomal subunit protein uS7m (rsm7), found in Schizosaccharomyces pombe (strain 972 / ATCC 24843) (Fission yeast).